Here is a 412-residue protein sequence, read N- to C-terminus: Protein png-1 (412 aa).

Zn(2+)-binding residues include C150, C153, C182, and C185. The segment at 363 to 412 is disordered; the sequence is AAAARGGRSSPDNKSGANMMGSPATGDIKRPIPEDAPVPDVPSLWPTYGP.

Belongs to the transglutaminase-like superfamily. PNGase family.

In Neurospora crassa (strain ATCC 24698 / 74-OR23-1A / CBS 708.71 / DSM 1257 / FGSC 987), this protein is Protein png-1 (un-7).